The chain runs to 327 residues: Delta-aminolevulinic acid dehydratase (327 aa).

3 residues coordinate Zn(2+): C119, C121, and C129. K198 serves as the catalytic Schiff-base intermediate with substrate. 5-aminolevulinate contacts are provided by R208 and R220. E236 provides a ligand contact to Mg(2+). Catalysis depends on K251, which acts as the Schiff-base intermediate with substrate. Residues S277 and Y316 each coordinate 5-aminolevulinate.

The protein belongs to the ALAD family. Homooctamer. The cofactor is Zn(2+).

It carries out the reaction 2 5-aminolevulinate = porphobilinogen + 2 H2O + H(+). It participates in porphyrin-containing compound metabolism; protoporphyrin-IX biosynthesis; coproporphyrinogen-III from 5-aminolevulinate: step 1/4. In terms of biological role, catalyzes an early step in the biosynthesis of tetrapyrroles. Binds two molecules of 5-aminolevulinate per subunit, each at a distinct site, and catalyzes their condensation to form porphobilinogen. The chain is Delta-aminolevulinic acid dehydratase (hemB) from Synechocystis sp. (strain ATCC 27184 / PCC 6803 / Kazusa).